We begin with the raw amino-acid sequence, 302 residues long: Bifunctional protein FolD 2 (302 aa).

Residues 170 to 172 (GRS), Ser-195, and Ile-236 contribute to the NADP(+) site.

It belongs to the tetrahydrofolate dehydrogenase/cyclohydrolase family. Homodimer.

It catalyses the reaction (6R)-5,10-methylene-5,6,7,8-tetrahydrofolate + NADP(+) = (6R)-5,10-methenyltetrahydrofolate + NADPH. It carries out the reaction (6R)-5,10-methenyltetrahydrofolate + H2O = (6R)-10-formyltetrahydrofolate + H(+). It participates in one-carbon metabolism; tetrahydrofolate interconversion. Functionally, catalyzes the oxidation of 5,10-methylenetetrahydrofolate to 5,10-methenyltetrahydrofolate and then the hydrolysis of 5,10-methenyltetrahydrofolate to 10-formyltetrahydrofolate. This chain is Bifunctional protein FolD 2, found in Paracoccus denitrificans (strain Pd 1222).